Consider the following 35-residue polypeptide: Photosystem II reaction center protein T (35 aa).

Residues 3–23 (ALVYTFLLXSTLGIIFFAIFF) traverse the membrane as a helical segment.

The protein belongs to the PsbT family. PSII is composed of 1 copy each of membrane proteins PsbA, PsbB, PsbC, PsbD, PsbE, PsbF, PsbH, PsbI, PsbJ, PsbK, PsbL, PsbM, PsbT, PsbY, PsbZ, Psb30/Ycf12, at least 3 peripheral proteins of the oxygen-evolving complex and a large number of cofactors. It forms dimeric complexes.

The protein resides in the plastid. It is found in the chloroplast thylakoid membrane. Found at the monomer-monomer interface of the photosystem II (PS II) dimer, plays a role in assembly and dimerization of PSII. PSII is a light-driven water plastoquinone oxidoreductase, using light energy to abstract electrons from H(2)O, generating a proton gradient subsequently used for ATP formation. The polypeptide is Photosystem II reaction center protein T (Cunninghamia lanceolata (China fir)).